We begin with the raw amino-acid sequence, 432 residues long: MAKNVVVIGAQWGDEGKGKIVDWLAEEAGGVVRFQGGHNAGHTLVVGGKKTILRLIPSGILHESLDCFIGSGVVVSPEALLGEIDELNAAGVKNVEGRLKIAPTCPLILPYHIALDQAREASRGKGKIGTTGRGIGPAYEDKVARRAIRAADLLHPEKLREKLDAVLAYYNVQLQHLHNAEPVKAEDVMAVIEKVAPRIAPMITDVSRVLNEKNKNGEKLLFEGAQGALLDIDYGTYPFVTSSNCLAGAASAGAGVGPQMLDYVLGIVKAYTTRVGSGPFPTELFDEVGVGLAERGHEFGSVTGRARRCGWFDAAALKRSIQINGISGMCITKLDVMDGVETINICVGYELPDGGKTDILPCGSDAVETCKPIYETMPGWRESTFGVKDYGALPENAKAYLKRIEEVCGAPVAIVSTGPDREETIVLHHPFA.

GTP is bound by residues 13–19 and 41–43; these read GDEGKGK and GHT. Asp-14 serves as the catalytic Proton acceptor. Mg(2+) contacts are provided by Asp-14 and Gly-41. Residues 14–17, 39–42, Thr-131, Arg-145, Gln-226, Thr-241, and Arg-305 contribute to the IMP site; these read DEGK and NAGH. His-42 (proton donor) is an active-site residue. Position 301 to 307 (301 to 307) interacts with substrate; sequence SVTGRAR. GTP contacts are provided by residues Arg-307, 333–335, and 416–418; these read KLD and STG.

Belongs to the adenylosuccinate synthetase family. As to quaternary structure, homodimer. It depends on Mg(2+) as a cofactor.

Its subcellular location is the cytoplasm. It catalyses the reaction IMP + L-aspartate + GTP = N(6)-(1,2-dicarboxyethyl)-AMP + GDP + phosphate + 2 H(+). It participates in purine metabolism; AMP biosynthesis via de novo pathway; AMP from IMP: step 1/2. In terms of biological role, plays an important role in the de novo pathway of purine nucleotide biosynthesis. Catalyzes the first committed step in the biosynthesis of AMP from IMP. The polypeptide is Adenylosuccinate synthetase (Neisseria meningitidis serogroup B (strain ATCC BAA-335 / MC58)).